The sequence spans 434 residues: MTEQSNRVFLLSLGCSKNTVDSERLMAQAEAAGVVFTESASDAETIIINTCGFIADAKEESINETLAAITEKESGRVRKIFVMGCLPELYRSELQTELPEVDGFFGTRELPAILTAIGARYRSELHLHRSLTAPGHTSFLKISEGCSRSCSFCSIPRIRGPYISQPLDQLLREARLLQEKGVQELNIIAQDITLYGVDLYGRQMLNDLLLRLSDMAFHWIRLLYAYPLNFPLEVIETMSQRGNICNYLDLPLQHCNDRILRSMNRGITKEGELALIEAIRQKNPDIRLRTTMIAGYPGETRQEFEELLEFAATVRFDRLGCFSYCHEEFSPAFALEDSVPEEEKQSRTAELMELQEGISEEKNKRLEGREIAVCIDRIEENTAWGRTEWDAPEVDNECSLEGAGHTIAPGSFCLARIDGSSPYELFGTVLKVPE.

An MTTase N-terminal domain is found at asparagine 6 to arginine 122. [4Fe-4S] cluster-binding residues include cysteine 15, cysteine 51, cysteine 85, cysteine 146, cysteine 150, and cysteine 153. Positions threonine 132 to glutamate 361 constitute a Radical SAM core domain. The 68-residue stretch at lysine 364–lysine 431 folds into the TRAM domain.

This sequence belongs to the methylthiotransferase family. RimO subfamily. Requires [4Fe-4S] cluster as cofactor.

Its subcellular location is the cytoplasm. The catalysed reaction is L-aspartate(89)-[ribosomal protein uS12]-hydrogen + (sulfur carrier)-SH + AH2 + 2 S-adenosyl-L-methionine = 3-methylsulfanyl-L-aspartate(89)-[ribosomal protein uS12]-hydrogen + (sulfur carrier)-H + 5'-deoxyadenosine + L-methionine + A + S-adenosyl-L-homocysteine + 2 H(+). Its function is as follows. Catalyzes the methylthiolation of an aspartic acid residue of ribosomal protein uS12. This chain is Ribosomal protein uS12 methylthiotransferase RimO, found in Chlorobium phaeovibrioides (strain DSM 265 / 1930) (Prosthecochloris vibrioformis (strain DSM 265)).